The following is a 282-amino-acid chain: NADPH-dependent 7-cyano-7-deazaguanine reductase (282 aa).

Residue 88 to 90 (IES) coordinates substrate. 90–91 (SK) is an NADPH binding site. Cys190 serves as the catalytic Thioimide intermediate. Asp197 functions as the Proton donor in the catalytic mechanism. Residue 229 to 230 (HE) participates in substrate binding. 258-259 (RG) lines the NADPH pocket.

It belongs to the GTP cyclohydrolase I family. QueF type 2 subfamily. In terms of assembly, homodimer.

The protein resides in the cytoplasm. The catalysed reaction is 7-aminomethyl-7-carbaguanine + 2 NADP(+) = 7-cyano-7-deazaguanine + 2 NADPH + 3 H(+). The protein operates within tRNA modification; tRNA-queuosine biosynthesis. Functionally, catalyzes the NADPH-dependent reduction of 7-cyano-7-deazaguanine (preQ0) to 7-aminomethyl-7-deazaguanine (preQ1). In Escherichia coli O139:H28 (strain E24377A / ETEC), this protein is NADPH-dependent 7-cyano-7-deazaguanine reductase.